Consider the following 1090-residue polypeptide: Exocyst complex component SEC5B (1090 aa).

Acidic residues predominate over residues 1–12 (MSSSDDLDEDEL). The segment at 1-126 (MSSSDDLDED…ARKEDDRAWD (126 aa)) is disordered. The span at 23-46 (RDVTYQKPPSANSRKPVTNLVQQP) shows a compositional bias: polar residues. Residues 52–62 (AAAPPSKGGAK) are compositionally biased toward low complexity. The segment covering 96–109 (GGGGDGGGGRGRGG) has biased composition (gly residues). Basic and acidic residues predominate over residues 110 to 126 (SGKERGRARKEDDRAWD). Ser179 is modified (phosphoserine). The span at 486–502 (VQLSDDTSSMEDNQVQV) shows a compositional bias: polar residues. Disordered stretches follow at residues 486 to 511 (VQLS…ESAR), 984 to 1013 (ETVE…QSSV), and 1055 to 1090 (PVAK…PRRR). The span at 999 to 1010 (RGSEDAISDDKQ) shows a compositional bias: basic and acidic residues. Positions 1062–1071 (SRTSTDSPSR) are enriched in polar residues.

Belongs to the SEC5 family. In terms of assembly, the exocyst complex is composed of SEC3, SEC5, SEC6, SEC8, SEC10, EXO70A1 and EXO84B.

Component of the exocyst complex involved in the docking of exocytic vesicles with fusion sites on the plasma membrane during regulated or polarized secretion. Involved in polarized cell growth and organ morphogenesis. During cytokinesis, involved in cell plate initiation, cell plate maturation and formation of new primary cell wall. The chain is Exocyst complex component SEC5B (SEC5B) from Arabidopsis thaliana (Mouse-ear cress).